Here is a 172-residue protein sequence, read N- to C-terminus: MPGIVELPTLEELKVDEVKISSAVLKAAAHHYGAQCDKPNKEFMLCRWEEKDPRRCLEEGKLVNKCALDFFRQIKRHCAEPFTEYWTCIDYTGQQLFRHCRKQQAKFDECVLDKMGWVRPDLGELSKVTKVKTDRPLPENPYHSRPRPDPSPEIEGDLKPAIHGSRFYFWTK.

CHCH domains lie at 33–74 (GAQC…FRQI) and 75–118 (KRHC…MGWV). 4 consecutive short sequence motifs (cx9C motif) follow at residues 36 to 46 (CDKPNKEFMLC), 56 to 66 (CLEEGKLVNKC), 78 to 88 (CAEPFTEYWTC), and 100 to 110 (CRKQQAKFDEC). Disulfide bonds link cysteine 36–cysteine 66, cysteine 46–cysteine 56, cysteine 78–cysteine 110, and cysteine 88–cysteine 100. A disordered region spans residues 133–159 (TDRPLPENPYHSRPRPDPSPEIEGDLK). Over residues 146-159 (PRPDPSPEIEGDLK) the composition is skewed to basic and acidic residues.

This sequence belongs to the complex I NDUFA8 subunit family. As to quaternary structure, complex I is composed of 45 different subunits.

The protein resides in the mitochondrion inner membrane. It localises to the mitochondrion intermembrane space. Its subcellular location is the mitochondrion. Its function is as follows. Accessory subunit of the mitochondrial membrane respiratory chain NADH dehydrogenase (Complex I), that is believed not to be involved in catalysis. Complex I functions in the transfer of electrons from NADH to the respiratory chain. The immediate electron acceptor for the enzyme is believed to be ubiquinone. This chain is NADH dehydrogenase [ubiquinone] 1 alpha subcomplex subunit 8 (NDUFA8), found in Pongo abelii (Sumatran orangutan).